Consider the following 75-residue polypeptide: Exodeoxyribonuclease 7 small subunit (75 aa).

It belongs to the XseB family. In terms of assembly, heterooligomer composed of large and small subunits.

It is found in the cytoplasm. It catalyses the reaction Exonucleolytic cleavage in either 5'- to 3'- or 3'- to 5'-direction to yield nucleoside 5'-phosphates.. Functionally, bidirectionally degrades single-stranded DNA into large acid-insoluble oligonucleotides, which are then degraded further into small acid-soluble oligonucleotides. The chain is Exodeoxyribonuclease 7 small subunit from Caldanaerobacter subterraneus subsp. tengcongensis (strain DSM 15242 / JCM 11007 / NBRC 100824 / MB4) (Thermoanaerobacter tengcongensis).